We begin with the raw amino-acid sequence, 61 residues long: Small ribosomal subunit protein uS14 (61 aa).

Residues cysteine 24, cysteine 27, cysteine 40, and cysteine 43 each contribute to the Zn(2+) site.

This sequence belongs to the universal ribosomal protein uS14 family. Zinc-binding uS14 subfamily. As to quaternary structure, part of the 30S ribosomal subunit. Contacts proteins S3 and S10. Requires Zn(2+) as cofactor.

Binds 16S rRNA, required for the assembly of 30S particles and may also be responsible for determining the conformation of the 16S rRNA at the A site. This chain is Small ribosomal subunit protein uS14, found in Macrococcus caseolyticus (strain JCSC5402) (Macrococcoides caseolyticum).